The chain runs to 339 residues: Transcription initiation factor IIB (339 aa).

The segment at 39–70 (EELICPVCGSKNIIKDYERAEIVCEMCGCVLQ) adopts a TFIIB-type zinc-finger fold. The Zn(2+) site is built by Cys-43, Cys-46, Cys-62, and Cys-65. 2 tandem repeats follow at residues 156 to 239 (SELD…SREL) and 250 to 331 (DYVP…ELTE).

This sequence belongs to the TFIIB family.

In terms of biological role, stabilizes TBP binding to an archaeal box-A promoter. Also responsible for recruiting RNA polymerase II to the pre-initiation complex (DNA-TBP-TFIIB). The chain is Transcription initiation factor IIB from Methanococcus maripaludis (strain C6 / ATCC BAA-1332).